Consider the following 295-residue polypeptide: Ribosomal RNA small subunit methyltransferase A (295 aa).

Residues Asn-31, Leu-33, Gly-58, Glu-79, Asp-104, and Asn-129 each contribute to the S-adenosyl-L-methionine site.

It belongs to the class I-like SAM-binding methyltransferase superfamily. rRNA adenine N(6)-methyltransferase family. RsmA subfamily.

Its subcellular location is the cytoplasm. The enzyme catalyses adenosine(1518)/adenosine(1519) in 16S rRNA + 4 S-adenosyl-L-methionine = N(6)-dimethyladenosine(1518)/N(6)-dimethyladenosine(1519) in 16S rRNA + 4 S-adenosyl-L-homocysteine + 4 H(+). In terms of biological role, specifically dimethylates two adjacent adenosines (A1518 and A1519) in the loop of a conserved hairpin near the 3'-end of 16S rRNA in the 30S particle. May play a critical role in biogenesis of 30S subunits. The chain is Ribosomal RNA small subunit methyltransferase A from Leuconostoc mesenteroides subsp. mesenteroides (strain ATCC 8293 / DSM 20343 / BCRC 11652 / CCM 1803 / JCM 6124 / NCDO 523 / NBRC 100496 / NCIMB 8023 / NCTC 12954 / NRRL B-1118 / 37Y).